A 197-amino-acid polypeptide reads, in one-letter code: Serine recombinase gin (197 aa).

The region spanning 1 to 134 (MLIGYVRVST…AGLAAARNKG (134 aa)) is the Resolvase/invertase-type recombinase catalytic domain. The O-(5'-phospho-DNA)-serine intermediate role is filled by serine 9. Residues 138 to 181 (GRPPKLTKAEWEQAGRLLAQGIPRKQVALIYDVALSTLYKKHPA) constitute a DNA-binding region (H-T-H motif).

Belongs to the site-specific recombinase resolvase family. As to quaternary structure, homodimer. During inversion, two dimers associate to form a homotetramer.

It is found in the host cytoplasm. Functionally, performs inversion of a viral segment (G-segment) that encodes two alternate pairs of tail fiber proteins thereby modifying the host specificity of the virus. Binds as a dimer to the viral gix sites which are 34-bp palindromic sequences that flank the invertible G-segment. Catalyzes site-specific recombination in the presence of the host factor Fis. Gin dimers bound to each of the gix sites and host factor Fis bound to the enhancer come together to form the synaptic complex. Each Gin monomer introduces a nick and becomes covalently attached to the 5'-phosphate of the DNA, resulting in double-stranded staggered breaks at both recombination sites. A 180 degrees rotation of one of the two Gin dimers followed by religation of the DNA leads to the inversion of the G-segment. The polypeptide is Serine recombinase gin (gin) (Escherichia coli (Bacteriophage D108)).